Consider the following 460-residue polypeptide: Armadillo repeat-containing protein LFR (460 aa).

The segment covering Met-1–Gly-10 has biased composition (low complexity). Residues Met-1–Gly-32 form a disordered region. ARM repeat units follow at residues Glu-225–Pro-267, Asn-321–Glu-360, and Asp-364–Ser-405.

In terms of assembly, interacts with CHR719, SWI3A and SWI3C. As to expression, expressed at low levels in coleoptiles, leaf tongues, mature leaves and nodes during the vegetative phase. Highly expressed in reproductive tissues such as young panicles, early developing seeds, embryos and endosperms.

Its subcellular location is the nucleus. Functionally, plays critical roles in both embryo and endosperm development. Required for free nuclei division and cellularization in early endosperm development, by preventing premature cell death in the endosperm. Involved in the regulation of pattern formation and organ differentiation during embryogenesis, by regulating genes involved in the early stages of seed development. The sequence is that of Armadillo repeat-containing protein LFR from Oryza sativa subsp. japonica (Rice).